Reading from the N-terminus, the 476-residue chain is Ataxin-10 (476 aa).

The residue at position 10 (Arg10) is an Omega-N-methylarginine. 2 positions are modified to phosphoserine: Ser13 and Ser78. Thr83 carries the post-translational modification Phosphothreonine. Position 431 is a phosphoserine (Ser431).

Belongs to the ataxin-10 family. As to quaternary structure, homooligomer. Interacts with GNB2. Interacts with IQCB1. Interacts with OGT. Polyubiquitinated. Post-translationally, phosphorylation at Ser-13 by AURKB promotes the association of ATXN10 with PLK1. Phosphorylation at Ser-78 and Thr-83 by PLK1 may play a role in the regulation of cytokinesis and may stimulate the proteasome-mediated degradation of ATXN10.

The protein resides in the cytoplasm. It is found in the perinuclear region. Its subcellular location is the midbody. The protein localises to the cytoskeleton. It localises to the cilium basal body. The protein resides in the microtubule organizing center. It is found in the centrosome. Its subcellular location is the centriole. Functionally, may play a role in the regulation of cytokinesis. May play a role in signaling by stimulating protein glycosylation. Induces neuritogenesis by activating the Ras-MAP kinase pathway and is necessary for the survival of cerebellar neurons. Does not appear to play a major role in ciliogenesis. The protein is Ataxin-10 (ATXN10) of Pongo abelii (Sumatran orangutan).